Reading from the N-terminus, the 390-residue chain is MTTTPTMTQKLPQALPTASIDLDAIAHNVAVLREHAGPAAVMAVVKADGYGHGATQVARAALAAGAAELGVATVGEALALRRDGVTARVLAWLHPPGTDFAPALLADVDVAVSSLRQFTDLLDAAGRTGRTADVTVKADTGLSRNGVGEADYPALVDALRRAASDGAVRVRGLMSHLAHGDDPEHPFNDVQARRLTEMAKLAGARGVSYDVVHLSNSPAALTRPDLAFDMVRPGIAVYGQTPIPQRGDFGLRPAMTVKCPVSAVRPVRAGDAVSYGHTWTAQTDTTLALVPAGYADGVFRALSNRFEVSINGRRYPNVGRICMDQFVVDLGPGPVDVAEGDDAILFGPGTDGEPTAQDWAELLDTINYEVVTSPRGRIVRTYVGGKGGPQ.

Lys46 functions as the Proton acceptor; specific for D-alanine in the catalytic mechanism. Lys46 carries the post-translational modification N6-(pyridoxal phosphate)lysine. Arg144 provides a ligand contact to substrate. Tyr275 functions as the Proton acceptor; specific for L-alanine in the catalytic mechanism. Met323 serves as a coordination point for substrate.

Belongs to the alanine racemase family. Requires pyridoxal 5'-phosphate as cofactor.

The enzyme catalyses L-alanine = D-alanine. It participates in amino-acid biosynthesis; D-alanine biosynthesis; D-alanine from L-alanine: step 1/1. Its function is as follows. Catalyzes the interconversion of L-alanine and D-alanine. May also act on other amino acids. This chain is Alanine racemase (alr), found in Mycolicibacterium vanbaalenii (strain DSM 7251 / JCM 13017 / BCRC 16820 / KCTC 9966 / NRRL B-24157 / PYR-1) (Mycobacterium vanbaalenii).